The chain runs to 340 residues: MAIRITFTYSTHVARNLVGTRVGPGGYCFESLVRPRFFSHKRDFDRSPRNRPASMYGSIARELIGEGSQSPLVMGLISILKSTTGHESSTMNVLGVSSFKASSIIPFLQGSKWIKNPPVIDDVDKGGTVCDDDDDKESRNGGSGWVNKLLSVCSEDAKAAFTAVTVSILFRSALAEPKSIPSTSMYPTLDKGDRVMAEKVSYFFRKPEVSDIVIFKAPPILLEYPEYGYSSNDVFIKRIVASEGDWVEVRDGKLFVNDIVQEEDFVLEPMSYEMEPMFVPKGYVFVLGDNRNKSFDSHNWGPLPIENIVGRSVFRYWPPSKVSDTIYHDQAITRGPVAVS.

A chloroplast-targeting transit peptide spans 1 to 52 (MAIRITFTYSTHVARNLVGTRVGPGGYCFESLVRPRFFSHKRDFDRSPRNRP). The helical transmembrane segment at 155–175 (EDAKAAFTAVTVSILFRSALA) threads the bilayer. Topologically, residues 176 to 340 (EPKSIPSTSM…AITRGPVAVS (165 aa)) are lumenal, thylakoid. Ser-184 is a catalytic residue.

This sequence belongs to the peptidase S26 family.

It is found in the plastid. Its subcellular location is the chloroplast thylakoid membrane. The enzyme catalyses Cleavage of hydrophobic, N-terminal signal or leader sequences from secreted and periplasmic proteins.. In terms of biological role, cleaves the thylakoid-transfer domain from a chloroplast protein. This Arabidopsis thaliana (Mouse-ear cress) protein is Thylakoidal processing peptidase 1, chloroplastic (TPP1).